Consider the following 249-residue polypeptide: MTTQISKKRKFVADGVFYAELNEVLTRELAEDGYSGVEVRVTPMRTEIIIRATRTQNVLGEKGRRIRELTSLVQKRFKFPVDSVELYAEKVNNRGLCAIAQAESLRYKLLGGLAVRRACYGVLRFVMESGAKGCEVIVSGKLRAARAKSMKFKDGYMVSSGQPTKEYIDSAVRHVLLRQGVLGIKVKVMLDWDPKGISGPKTPLPDVVIIHSPKEEEAIYAPAQVAAPAALVADAPLTAVDYPAMIPVA.

The region spanning 21-92 is the KH type-2 domain; sequence LNEVLTRELA…SVELYAEKVN (72 aa). At Ser-212 the chain carries Phosphoserine.

Belongs to the universal ribosomal protein uS3 family.

In Arabidopsis thaliana (Mouse-ear cress), this protein is Small ribosomal subunit protein uS3y (RPS3B).